A 139-amino-acid polypeptide reads, in one-letter code: Putative pre-16S rRNA nuclease (139 aa).

It belongs to the YqgF nuclease family.

The protein localises to the cytoplasm. Could be a nuclease involved in processing of the 5'-end of pre-16S rRNA. This chain is Putative pre-16S rRNA nuclease, found in Pectobacterium carotovorum subsp. carotovorum (strain PC1).